The chain runs to 159 residues: Small ribosomal subunit protein uS17 (159 aa).

This sequence belongs to the universal ribosomal protein uS17 family.

This Euphorbia esula (Leafy spurge) protein is Small ribosomal subunit protein uS17 (RPS11).